The sequence spans 431 residues: tRNA(Ile)-lysidine synthase (431 aa).

20–25 is an ATP binding site; the sequence is SGGLDS.

The protein belongs to the tRNA(Ile)-lysidine synthase family.

It is found in the cytoplasm. It catalyses the reaction cytidine(34) in tRNA(Ile2) + L-lysine + ATP = lysidine(34) in tRNA(Ile2) + AMP + diphosphate + H(+). Its function is as follows. Ligates lysine onto the cytidine present at position 34 of the AUA codon-specific tRNA(Ile) that contains the anticodon CAU, in an ATP-dependent manner. Cytidine is converted to lysidine, thus changing the amino acid specificity of the tRNA from methionine to isoleucine. In Escherichia coli O157:H7, this protein is tRNA(Ile)-lysidine synthase.